We begin with the raw amino-acid sequence, 528 residues long: Ribonuclease Y (528 aa).

The helical transmembrane segment at Ser-15–Phe-35 threads the bilayer. The 61-residue stretch at Asn-217 to Leu-277 folds into the KH domain. The HD domain maps to Val-343–Ala-436.

Belongs to the RNase Y family.

The protein localises to the cell membrane. Functionally, endoribonuclease that initiates mRNA decay. This is Ribonuclease Y from Aster yellows witches'-broom phytoplasma (strain AYWB).